Reading from the N-terminus, the 129-residue chain is Follitropin subunit beta (129 aa).

The first 19 residues, 1–19, serve as a signal peptide directing secretion; the sequence is MKSVQFCFLFCCWRAICCR. Disulfide bonds link Cys-21–Cys-69, Cys-35–Cys-84, Cys-38–Cys-122, Cys-46–Cys-100, Cys-50–Cys-102, and Cys-105–Cys-112. Asn-25 and Asn-42 each carry an N-linked (GlcNAc...) asparagine glycan.

The protein belongs to the glycoprotein hormones subunit beta family. In terms of assembly, heterodimer. The active follitropin is a heterodimer composed of an alpha chain/CGA shared with other hormones and a unique beta chain/FSHB shown here.

The protein localises to the secreted. Its function is as follows. Together with the alpha chain CGA constitutes follitropin, the follicle-stimulating hormone, and provides its biological specificity to the hormone heterodimer. Binds FSHR, a G protein-coupled receptor, on target cells to activate downstream signaling pathways. Follitropin is involved in follicle development and spermatogenesis in reproductive organs. The polypeptide is Follitropin subunit beta (FSHB) (Ovis aries (Sheep)).